A 116-amino-acid polypeptide reads, in one-letter code: Large ribosomal subunit protein bL20 (116 aa).

It belongs to the bacterial ribosomal protein bL20 family.

Its function is as follows. Binds directly to 23S ribosomal RNA and is necessary for the in vitro assembly process of the 50S ribosomal subunit. It is not involved in the protein synthesizing functions of that subunit. In Phocaeicola vulgatus (strain ATCC 8482 / DSM 1447 / JCM 5826 / CCUG 4940 / NBRC 14291 / NCTC 11154) (Bacteroides vulgatus), this protein is Large ribosomal subunit protein bL20.